A 291-amino-acid chain; its full sequence is Lipoyl synthase (291 aa).

Residues C36, C41, C47, C62, C66, C69, and S275 each contribute to the [4Fe-4S] cluster site. The region spanning 48-264 is the Radical SAM core domain; the sequence is FSKKTATFLI…KEFAISIGFK (217 aa).

It belongs to the radical SAM superfamily. Lipoyl synthase family. [4Fe-4S] cluster serves as cofactor.

The protein localises to the cytoplasm. It carries out the reaction [[Fe-S] cluster scaffold protein carrying a second [4Fe-4S](2+) cluster] + N(6)-octanoyl-L-lysyl-[protein] + 2 oxidized [2Fe-2S]-[ferredoxin] + 2 S-adenosyl-L-methionine + 4 H(+) = [[Fe-S] cluster scaffold protein] + N(6)-[(R)-dihydrolipoyl]-L-lysyl-[protein] + 4 Fe(3+) + 2 hydrogen sulfide + 2 5'-deoxyadenosine + 2 L-methionine + 2 reduced [2Fe-2S]-[ferredoxin]. It functions in the pathway protein modification; protein lipoylation via endogenous pathway; protein N(6)-(lipoyl)lysine from octanoyl-[acyl-carrier-protein]: step 2/2. Catalyzes the radical-mediated insertion of two sulfur atoms into the C-6 and C-8 positions of the octanoyl moiety bound to the lipoyl domains of lipoate-dependent enzymes, thereby converting the octanoylated domains into lipoylated derivatives. The chain is Lipoyl synthase from Caldicellulosiruptor bescii (strain ATCC BAA-1888 / DSM 6725 / KCTC 15123 / Z-1320) (Anaerocellum thermophilum).